Consider the following 332-residue polypeptide: Holliday junction branch migration complex subunit RuvB (332 aa).

Positions 1–181 (MSRILDNEMM…FGITGHMEYY (181 aa)) are large ATPase domain (RuvB-L). ATP contacts are provided by residues Leu-20, Arg-21, Gly-62, Lys-65, Thr-66, Thr-67, 128-130 (EDF), Arg-171, Tyr-181, and Arg-218. Position 66 (Thr-66) interacts with Mg(2+). Positions 182 to 252 (AHADLTEIVE…ITDKALTMLD (71 aa)) are small ATPAse domain (RuvB-S). Residues 255 to 332 (HEGLDYVDQK…EHLGYEYSEK (78 aa)) are head domain (RuvB-H). 4 residues coordinate DNA: Arg-291, Arg-310, Arg-312, and Arg-315.

It belongs to the RuvB family. Homohexamer. Forms an RuvA(8)-RuvB(12)-Holliday junction (HJ) complex. HJ DNA is sandwiched between 2 RuvA tetramers; dsDNA enters through RuvA and exits via RuvB. An RuvB hexamer assembles on each DNA strand where it exits the tetramer. Each RuvB hexamer is contacted by two RuvA subunits (via domain III) on 2 adjacent RuvB subunits; this complex drives branch migration. In the full resolvosome a probable DNA-RuvA(4)-RuvB(12)-RuvC(2) complex forms which resolves the HJ.

Its subcellular location is the cytoplasm. The enzyme catalyses ATP + H2O = ADP + phosphate + H(+). Its function is as follows. The RuvA-RuvB-RuvC complex processes Holliday junction (HJ) DNA during genetic recombination and DNA repair, while the RuvA-RuvB complex plays an important role in the rescue of blocked DNA replication forks via replication fork reversal (RFR). RuvA specifically binds to HJ cruciform DNA, conferring on it an open structure. The RuvB hexamer acts as an ATP-dependent pump, pulling dsDNA into and through the RuvAB complex. RuvB forms 2 homohexamers on either side of HJ DNA bound by 1 or 2 RuvA tetramers; 4 subunits per hexamer contact DNA at a time. Coordinated motions by a converter formed by DNA-disengaged RuvB subunits stimulates ATP hydrolysis and nucleotide exchange. Immobilization of the converter enables RuvB to convert the ATP-contained energy into a lever motion, pulling 2 nucleotides of DNA out of the RuvA tetramer per ATP hydrolyzed, thus driving DNA branch migration. The RuvB motors rotate together with the DNA substrate, which together with the progressing nucleotide cycle form the mechanistic basis for DNA recombination by continuous HJ branch migration. Branch migration allows RuvC to scan DNA until it finds its consensus sequence, where it cleaves and resolves cruciform DNA. In Streptococcus pneumoniae serotype 4 (strain ATCC BAA-334 / TIGR4), this protein is Holliday junction branch migration complex subunit RuvB.